The sequence spans 367 residues: Putative 12-oxophytodienoate reductase 11 (367 aa).

Residues 26-28 (PLT), Ala-59, and Gln-101 contribute to the FMN site. 178-181 (HGAH) is a binding site for substrate. The active-site Proton donor is Tyr-183. Arg-230 serves as a coordination point for FMN. Arg-270 is a binding site for substrate. Residues Gly-300 and 321–322 (GR) contribute to the FMN site.

It belongs to the NADH:flavin oxidoreductase/NADH oxidase family. FMN is required as a cofactor.

Its function is as follows. Putative oxophytodienoate reductase that may be involved in the biosynthesis or metabolism of oxylipin signaling molecules. The polypeptide is Putative 12-oxophytodienoate reductase 11 (OPR11) (Oryza sativa subsp. japonica (Rice)).